The primary structure comprises 178 residues: Adenine phosphoribosyltransferase (178 aa).

The protein belongs to the purine/pyrimidine phosphoribosyltransferase family. As to quaternary structure, homodimer.

Its subcellular location is the cytoplasm. It carries out the reaction AMP + diphosphate = 5-phospho-alpha-D-ribose 1-diphosphate + adenine. The protein operates within purine metabolism; AMP biosynthesis via salvage pathway; AMP from adenine: step 1/1. Catalyzes a salvage reaction resulting in the formation of AMP, that is energically less costly than de novo synthesis. This is Adenine phosphoribosyltransferase from Cereibacter sphaeroides (strain KD131 / KCTC 12085) (Rhodobacter sphaeroides).